The following is a 271-amino-acid chain: GTP cyclohydrolase FolE2 (271 aa).

It belongs to the GTP cyclohydrolase IV family.

The catalysed reaction is GTP + H2O = 7,8-dihydroneopterin 3'-triphosphate + formate + H(+). It functions in the pathway cofactor biosynthesis; 7,8-dihydroneopterin triphosphate biosynthesis; 7,8-dihydroneopterin triphosphate from GTP: step 1/1. In terms of biological role, converts GTP to 7,8-dihydroneopterin triphosphate. The sequence is that of GTP cyclohydrolase FolE2 from Geotalea uraniireducens (strain Rf4) (Geobacter uraniireducens).